The primary structure comprises 536 residues: Chaperonin GroEL 1 (536 aa).

ATP is bound by residues 29-32 (TLGP), 86-90 (DGTTT), Gly413, 476-478 (NAA), and Asp492.

Belongs to the chaperonin (HSP60) family. In terms of assembly, forms a cylinder of 14 subunits composed of two heptameric rings stacked back-to-back. Interacts with the co-chaperonin GroES.

The protein localises to the cytoplasm. The catalysed reaction is ATP + H2O + a folded polypeptide = ADP + phosphate + an unfolded polypeptide.. Together with its co-chaperonin GroES, plays an essential role in assisting protein folding. The GroEL-GroES system forms a nano-cage that allows encapsulation of the non-native substrate proteins and provides a physical environment optimized to promote and accelerate protein folding. The sequence is that of Chaperonin GroEL 1 from Nocardia farcinica (strain IFM 10152).